A 175-amino-acid chain; its full sequence is Inner membrane protein p54 (175 aa).

Residues 32–52 form a helical membrane-spanning segment; it reads CTILVAIVVLIIIIIVLIYLF. Residues 79–89 are compositionally biased toward polar residues; sequence QWAGATPQPGT. Positions 79-121 are disordered; it reads QWAGATPQPGTSKPAGATTGNVGKPITDRPATDRPVTNNPVTD. Positions 141-153 are interaction with host DYNLL1; the sequence is YTTATTQNTASQT.

This sequence belongs to the asfivirus envelope protein p54 family. In terms of assembly, interacts with the host light chain cytoplasmic dynein DYNLL1; this interaction is critical for intracellular microtubule-dependent virus transport toward viral factories.

It is found in the virion membrane. Its subcellular location is the host cytoplasm. The protein localises to the host cytoskeleton. The protein resides in the host endoplasmic reticulum membrane. Its function is as follows. Inner envelope protein involved, through its interaction with host dynein, in the intracellular microtubule-dependent transport of viral capsid toward viral factories. Seems to induce caspase-3 activation and apoptosis. Plays a role in virion morphogenesis by recruiting and transforming the host ER membranes into the precursors of the viral envelope. Involved in virus attachment to the host cell. This chain is Inner membrane protein p54, found in African swine fever virus (isolate Pig/Kenya/KEN-50/1950) (ASFV).